Reading from the N-terminus, the 591-residue chain is BRCA1-associated protein (591 aa).

S52 is modified (phosphoserine). Residues 82-93 are compositionally biased toward basic and acidic residues; sequence DEVRDTVEEKKP. The segment at 82–124 is disordered; the sequence is DEVRDTVEEKKPSAAPVSAQRSREQSESVNTAPESPSKQLPDQ. Positions 108–124 are enriched in polar residues; that stretch reads ESVNTAPESPSKQLPDQ. S116 and S118 each carry phosphoserine. The RING-type zinc finger occupies 263 to 303; it reads CTVCLERMDESVNGILTTLCNHSFHSQCLQRWDDTTCPVCR. The UBP-type; degenerate zinc finger occupies 300–392; the sequence is PVCRYCQTPE…GKIVQYECEG (93 aa). Zn(2+) is bound by residues C316, C319, C328, C331, C336, H343, H347, and H353. Residues 430–536 adopt a coiled-coil conformation; it reads EKDTAEEINN…EIQEQLRDVM (107 aa). Positions 563-591 are disordered; it reads IAMASAPNPPSSGAGGKLQSRKGRSKRGK. Over residues 581-591 the composition is skewed to basic residues; sequence QSRKGRSKRGK.

In terms of assembly, interacts with the nuclear localization signal of BRCA1 and with the N-terminal of KSR1. The C-terminal portion of BRCA1 interacts with DDB1. As to expression, isoform 2 is highly expressed in testis, lower levels in brain, heart, lung, stomach, colon, uterus, liver and kidney. Isoform 1 is only expressed in the testis. Isoform 2 is predominant over isoform 1 in both fetal and adult testis.

It is found in the cytoplasm. The enzyme catalyses S-ubiquitinyl-[E2 ubiquitin-conjugating enzyme]-L-cysteine + [acceptor protein]-L-lysine = [E2 ubiquitin-conjugating enzyme]-L-cysteine + N(6)-ubiquitinyl-[acceptor protein]-L-lysine.. It participates in protein modification; protein ubiquitination. Negatively regulates MAP kinase activation by limiting the formation of Raf/MEK complexes probably by inactivation of the KSR1 scaffold protein. Also acts as a Ras responsive E3 ubiquitin ligase that, on activation of Ras, is modified by auto-polyubiquitination resulting in the release of inhibition of Raf/MEK complex formation. May also act as a cytoplasmic retention protein with a role in regulating nuclear transport. In Mus musculus (Mouse), this protein is BRCA1-associated protein.